The primary structure comprises 583 residues: Long-chain-fatty-acid--AMP ligase FadD26 (583 aa).

The protein belongs to the ATP-dependent AMP-binding enzyme family.

It catalyses the reaction holo-[(phenol)carboxyphthiodiolenone synthase] + a long-chain fatty acid + ATP = a long-chain fatty acyl-[(phenol)carboxyphthiodiolenone synthase] + AMP + diphosphate. It carries out the reaction eicosanoate + holo-[(phenol)carboxyphthiodiolenone synthase] + ATP = icosanoyl-[(phenol)carboxyphthiodiolenone synthase] + AMP + diphosphate. The catalysed reaction is holo-[(phenol)carboxyphthiodiolenone synthase] + docosanoate + ATP = docosanoyl-[(phenol)carboxyphthiodiolenone synthase] + AMP + diphosphate. It participates in lipid metabolism; fatty acid biosynthesis. Catalyzes the activation of long-chain fatty acids as acyl-adenylates (acyl-AMP), which are then transferred to the multifunctional polyketide synthase PpsA for further chain extension. Catalyzes the adenylation of the long-chain fatty acids eicosanoate (C20) or docosanoate (C22), and potentially the very-long-chain fatty acid lignocerate (C24). Involved in the biosynthesis of phthiocerol dimycocerosate (DIM A) and phthiodiolone dimycocerosate (DIM B). In Mycobacterium tuberculosis (strain CDC 1551 / Oshkosh), this protein is Long-chain-fatty-acid--AMP ligase FadD26 (fadD26).